A 101-amino-acid chain; its full sequence is Aspartyl/glutamyl-tRNA(Asn/Gln) amidotransferase subunit C (101 aa).

Belongs to the GatC family. In terms of assembly, heterotrimer of A, B and C subunits.

It catalyses the reaction L-glutamyl-tRNA(Gln) + L-glutamine + ATP + H2O = L-glutaminyl-tRNA(Gln) + L-glutamate + ADP + phosphate + H(+). The catalysed reaction is L-aspartyl-tRNA(Asn) + L-glutamine + ATP + H2O = L-asparaginyl-tRNA(Asn) + L-glutamate + ADP + phosphate + 2 H(+). Its function is as follows. Allows the formation of correctly charged Asn-tRNA(Asn) or Gln-tRNA(Gln) through the transamidation of misacylated Asp-tRNA(Asn) or Glu-tRNA(Gln) in organisms which lack either or both of asparaginyl-tRNA or glutaminyl-tRNA synthetases. The reaction takes place in the presence of glutamine and ATP through an activated phospho-Asp-tRNA(Asn) or phospho-Glu-tRNA(Gln). The sequence is that of Aspartyl/glutamyl-tRNA(Asn/Gln) amidotransferase subunit C from Lactococcus lactis subsp. cremoris (strain MG1363).